An 89-amino-acid chain; its full sequence is Small ribosomal subunit protein uS15 (89 aa).

Belongs to the universal ribosomal protein uS15 family. Part of the 30S ribosomal subunit. Forms a bridge to the 50S subunit in the 70S ribosome, contacting the 23S rRNA.

Its function is as follows. One of the primary rRNA binding proteins, it binds directly to 16S rRNA where it helps nucleate assembly of the platform of the 30S subunit by binding and bridging several RNA helices of the 16S rRNA. Forms an intersubunit bridge (bridge B4) with the 23S rRNA of the 50S subunit in the ribosome. The sequence is that of Small ribosomal subunit protein uS15 from Shewanella frigidimarina (strain NCIMB 400).